The primary structure comprises 252 residues: tRNA (guanine-N(7)-)-methyltransferase (252 aa).

The S-adenosyl-L-methionine site is built by Glu80, Glu105, Asp132, and Asp155. The active site involves Asp155. Residues Lys159, Asp191, and 231-234 (TKFE) contribute to the substrate site.

It belongs to the class I-like SAM-binding methyltransferase superfamily. TrmB family.

The catalysed reaction is guanosine(46) in tRNA + S-adenosyl-L-methionine = N(7)-methylguanosine(46) in tRNA + S-adenosyl-L-homocysteine. The protein operates within tRNA modification; N(7)-methylguanine-tRNA biosynthesis. Catalyzes the formation of N(7)-methylguanine at position 46 (m7G46) in tRNA. This is tRNA (guanine-N(7)-)-methyltransferase from Actinobacillus succinogenes (strain ATCC 55618 / DSM 22257 / CCUG 43843 / 130Z).